The sequence spans 482 residues: NADH-quinone oxidoreductase subunit N (482 aa).

The next 13 helical transmembrane spans lie at 10–30, 44–64, 77–97, 113–133, 166–186, 206–226, 243–265, 277–296, 302–322, 328–348, 374–394, 397–417, and 451–471; these read ALGP…LILY, VGAI…PLGA, GFAR…LLLA, ILIV…DLIG, FVLG…VYGF, LGLV…LAAV, VTAF…VFIG, IIVF…AIGQ, LMAY…AAGT, GVVV…AVIL, AFCL…AGFF, FYVF…IGVV, and IVLA…APLV.

This sequence belongs to the complex I subunit 2 family. In terms of assembly, NDH-1 is composed of 14 different subunits. Subunits NuoA, H, J, K, L, M, N constitute the membrane sector of the complex.

Its subcellular location is the cell inner membrane. It catalyses the reaction a quinone + NADH + 5 H(+)(in) = a quinol + NAD(+) + 4 H(+)(out). Functionally, NDH-1 shuttles electrons from NADH, via FMN and iron-sulfur (Fe-S) centers, to quinones in the respiratory chain. The immediate electron acceptor for the enzyme in this species is believed to be ubiquinone. Couples the redox reaction to proton translocation (for every two electrons transferred, four hydrogen ions are translocated across the cytoplasmic membrane), and thus conserves the redox energy in a proton gradient. This chain is NADH-quinone oxidoreductase subunit N, found in Methylobacterium nodulans (strain LMG 21967 / CNCM I-2342 / ORS 2060).